The sequence spans 278 residues: 4-deoxy-L-threo-5-hexosulose-uronate ketol-isomerase (278 aa).

Zn(2+)-binding residues include H196, H198, E203, and H245.

The protein belongs to the KduI family. Zn(2+) is required as a cofactor.

It catalyses the reaction 5-dehydro-4-deoxy-D-glucuronate = 3-deoxy-D-glycero-2,5-hexodiulosonate. It functions in the pathway glycan metabolism; pectin degradation; 2-dehydro-3-deoxy-D-gluconate from pectin: step 4/5. Its function is as follows. Catalyzes the isomerization of 5-dehydro-4-deoxy-D-glucuronate to 3-deoxy-D-glycero-2,5-hexodiulosonate. In Salmonella dublin (strain CT_02021853), this protein is 4-deoxy-L-threo-5-hexosulose-uronate ketol-isomerase.